We begin with the raw amino-acid sequence, 86 residues long: Toxin Tpa6 (86 aa).

Positions methionine 1–alanine 20 are cleaved as a signal peptide. One can recognise an LCN-type CS-alpha/beta domain in the interval arginine 22 to methionine 85. 4 disulfides stabilise this stretch: cysteine 33–cysteine 84, cysteine 37–cysteine 58, cysteine 43–cysteine 64, and cysteine 47–cysteine 66.

The protein belongs to the long (4 C-C) scorpion toxin superfamily. Sodium channel inhibitor family. Beta subfamily. Expressed by the venom gland.

It localises to the secreted. Its function is as follows. Beta toxins bind voltage-independently at site-4 of sodium channels (Nav) and shift the voltage of activation toward more negative potentials thereby affecting sodium channel activation and promoting spontaneous and repetitive firing. This Tityus pachyurus (Colombian scorpion) protein is Toxin Tpa6.